Reading from the N-terminus, the 207-residue chain is Cytochrome c biogenesis ATP-binding export protein CcmA (207 aa).

In terms of domain architecture, ABC transporter spans 2–204 (LECENLSCTR…TTIDIRNFNR (203 aa)). Position 34–41 (34–41 (GPNGSGKT)) interacts with ATP.

The protein belongs to the ABC transporter superfamily. CcmA exporter (TC 3.A.1.107) family. In terms of assembly, the complex is composed of two ATP-binding proteins (CcmA) and two transmembrane proteins (CcmB).

It is found in the cell membrane. It carries out the reaction heme b(in) + ATP + H2O = heme b(out) + ADP + phosphate + H(+). Functionally, part of the ABC transporter complex CcmAB involved in the biogenesis of c-type cytochromes; once thought to export heme, this seems not to be the case, but its exact role is uncertain. Responsible for energy coupling to the transport system. In Wolbachia pipientis wMel, this protein is Cytochrome c biogenesis ATP-binding export protein CcmA.